The following is a 676-amino-acid chain: tRNA uridine 5-carboxymethylaminomethyl modification enzyme MnmG (676 aa).

FAD is bound at residue 15 to 20 (GAGHAG). An NAD(+)-binding site is contributed by 316–330 (GPRYCPSIEDKIVRF).

The protein belongs to the MnmG family. In terms of assembly, homodimer. Heterotetramer of two MnmE and two MnmG subunits. FAD serves as cofactor.

It localises to the cytoplasm. NAD-binding protein involved in the addition of a carboxymethylaminomethyl (cmnm) group at the wobble position (U34) of certain tRNAs, forming tRNA-cmnm(5)s(2)U34. This is tRNA uridine 5-carboxymethylaminomethyl modification enzyme MnmG from Roseiflexus castenholzii (strain DSM 13941 / HLO8).